The chain runs to 314 residues: Coiled-coil domain-containing protein 42 like-2 (314 aa).

2 coiled-coil regions span residues 34-133 (RLLE…KGTL) and 175-231 (NKLL…FQWE).

This sequence belongs to the CFAP73 family.

This chain is Coiled-coil domain-containing protein 42 like-2, found in Xenopus tropicalis (Western clawed frog).